The following is a 223-amino-acid chain: uncharacterized protein (223 aa).

It localises to the plastid. The protein resides in the chloroplast. This is an uncharacterized protein from Mesostigma viride (Green alga).